Reading from the N-terminus, the 314-residue chain is Three-prime repair exonuclease 1 (314 aa).

Residues aspartate 18 and glutamate 20 each coordinate Mg(2+). 20–21 (EA) is a substrate binding site. Position 78 is a phosphoserine (serine 78). Tyrosine 129 is a substrate binding site. Serine 167 is modified (phosphoserine). Histidine 195 acts as the Proton donor/acceptor in catalysis. Mg(2+) is bound at residue aspartate 200. Position 200 (aspartate 200) interacts with substrate. The tract at residues 236-314 (TASARTKPRP…YGLSLATPGE (79 aa)) is necessary for endoplasmic reticulum localization. Residues 240-278 (RTKPRPSAVTTTAHLATTRNTSPSLGESRGTKDLPPVKD) form a disordered region. The interval 243–314 (PRPSAVTTTA…YGLSLATPGE (72 aa)) is interaction with UBQLN1. Residues 247-260 (AVTTTAHLATTRNT) are compositionally biased toward low complexity. Position 261 is a phosphoserine (serine 261). The necessary for cytoplasmic retention stretch occupies residues 281–314 (ALSREGLLAPLGLLAILTLAVATLYGLSLATPGE).

It belongs to the exonuclease superfamily. TREX family. Homodimer. Interacts (via proline-rich region) with TCERG1/CA150 (via the second WW domain). Component of the SET complex, composed of at least ANP32A, APEX1, HMGB2, NME1, SET and TREX1. Within this complex, directly interacts with SET; this interaction does not result in TREX1 inhibition. Also interacts with NME1, but only following translocation to the nucleus. Directly interacts with UBQLN1 (via ubiquitin-like domain); the interaction may control TREX1 subcellular location. It depends on Mg(2+) as a cofactor. Post-translationally, ubiquitinated, but not targeted to proteasomal degradation. Ubiquitination may be important for interaction with UBQLN1. Detected in thymus, spleen, liver, brain, heart, small intestine and colon.

It is found in the nucleus. Its subcellular location is the cytoplasm. The protein localises to the cytosol. The protein resides in the endoplasmic reticulum membrane. The enzyme catalyses Exonucleolytic cleavage in the 3'- to 5'-direction to yield nucleoside 5'-phosphates.. Functionally, major cellular 3'-to-5' DNA exonuclease which digests single-stranded DNA (ssDNA) and double-stranded DNA (dsDNA) with mismatched 3' termini. Prevents cell-intrinsic initiation of autoimmunity. Acts by metabolizing DNA fragments from endogenous retroelements, including L1, LTR and SINE elements. Plays a key role in degradation of DNA fragments at cytosolic micronuclei arising from genome instability: its association with the endoplasmic reticulum membrane directs TREX1 to ruptured micronuclei, leading to micronuclear DNA degradation. Micronuclear DNA degradation is required to limit CGAS activation and subsequent inflammation. Unless degraded, these DNA fragments accumulate in the cytosol and activate the cGAS-STING innate immune signaling, leading to the production of type I interferon. Prevents chronic ATM-dependent checkpoint activation, by processing ssDNA polynucleotide species arising from the processing of aberrant DNA replication intermediates. Inefficiently degrades oxidized DNA, such as that generated upon antimicrobial reactive oxygen production or upon absorption of UV light. During GZMA-mediated cell death, contributes to DNA damage in concert with NME1. NME1 nicks one strand of DNA and TREX1 removes bases from the free 3' end to enhance DNA damage and prevent DNA end reannealing and rapid repair. This chain is Three-prime repair exonuclease 1, found in Homo sapiens (Human).